Here is an 89-residue protein sequence, read N- to C-terminus: Small ribosomal subunit protein uS15 (89 aa).

This sequence belongs to the universal ribosomal protein uS15 family. As to quaternary structure, part of the 30S ribosomal subunit. Forms a bridge to the 50S subunit in the 70S ribosome, contacting the 23S rRNA.

Functionally, one of the primary rRNA binding proteins, it binds directly to 16S rRNA where it helps nucleate assembly of the platform of the 30S subunit by binding and bridging several RNA helices of the 16S rRNA. In terms of biological role, forms an intersubunit bridge (bridge B4) with the 23S rRNA of the 50S subunit in the ribosome. This chain is Small ribosomal subunit protein uS15, found in Agrobacterium fabrum (strain C58 / ATCC 33970) (Agrobacterium tumefaciens (strain C58)).